Here is a 424-residue protein sequence, read N- to C-terminus: GTPase Obg (424 aa).

The 158-residue stretch at 1-158 folds into the Obg domain; it reads MFIDTAKILV…RMINLEIKLL (158 aa). One can recognise an OBG-type G domain in the interval 159 to 331; that stretch reads ADVGLIGFPN…LIKEVTRQLS (173 aa). GTP contacts are provided by residues 165–172, 190–194, 212–215, 282–285, and 312–314; these read GFPNVGKS, FTTLK, DIPG, NKID, and SAA. 2 residues coordinate Mg(2+): S172 and T192. The region spanning 345 to 424 is the OCT domain; sequence RFMPEEKRFT…LNDFEFDFLL (80 aa).

This sequence belongs to the TRAFAC class OBG-HflX-like GTPase superfamily. OBG GTPase family. In terms of assembly, monomer. The cofactor is Mg(2+).

It is found in the cytoplasm. Its function is as follows. An essential GTPase which binds GTP, GDP and possibly (p)ppGpp with moderate affinity, with high nucleotide exchange rates and a fairly low GTP hydrolysis rate. Plays a role in control of the cell cycle, stress response, ribosome biogenesis and in those bacteria that undergo differentiation, in morphogenesis control. The chain is GTPase Obg from Clostridium novyi (strain NT).